The following is a 590-amino-acid chain: Protein OS-9 homolog (590 aa).

Positions 1–19 are cleaved as a signal peptide; sequence MRRPSLALLALSSLPFGSA. Residues 83–106 form a disordered region; the sequence is SAIRESATANADTDNGDESIGGTS. Residue Asn136 is glycosylated (N-linked (GlcNAc...) asparagine). The region spanning 167–312 is the MRH domain; that stretch reads NQCLHFVSGW…VIHTPRLCAD (146 aa). Cys169 and Cys182 are disulfide-bonded. Residues Trp176, Trp177, and Gln189 each contribute to the a mannooligosaccharide derivative site. A disordered region spans residues 198 to 248; sequence GGPPLRDKNSQEYILGTSLPPSSHSQKGKQIEVPNNEQKQLSPPPNTELQA. Disulfide bonds link Cys265/Cys298 and Cys280/Cys310. A mannooligosaccharide derivative-binding residues include Asp266, Arg272, Glu294, and Tyr300. 3 disordered regions span residues 357–376, 436–472, and 545–590; these read AAVT…PEKL, GDDN…MKKM, and YEDE…RDEL. Positions 446-455 are enriched in basic residues; it reads HHPKAGKGRK. Basic and acidic residues-rich tracts occupy residues 556-568 and 579-590; these read EAGK…KKGG and EGSKEEYYRDEL. Positions 587–590 match the Prevents secretion from ER motif; the sequence is RDEL.

Belongs to the OS-9 family. Interacts with missfolded ER lumenal proteins.

It localises to the endoplasmic reticulum membrane. Its function is as follows. Lectin involved in the quality control of the secretory pathway. As a member of the endoplasmic reticulum-associated degradation lumenal (ERAD-L) surveillance system, targets misfolded endoplasmic reticulum lumenal glycoproteins for degradation. The protein is Protein OS-9 homolog (yos-9) of Neurospora crassa (strain ATCC 24698 / 74-OR23-1A / CBS 708.71 / DSM 1257 / FGSC 987).